The following is a 430-amino-acid chain: KICSTOR complex protein kaptin (430 aa).

The tract at residues 410–430 is disordered; that stretch reads RKHQQGLGDRVGPRPVEHPAS. Positions 420–430 are enriched in basic and acidic residues; sequence VGPRPVEHPAS.

Part of the KICSTOR complex composed of KPTN, ITFG2, KICS2 and SZT2. SZT2 probably serves as a link between the other three proteins in the KICSTOR complex and mediates the direct interaction with the GATOR1 complex. May associate with F-actin filaments.

Its subcellular location is the lysosome membrane. The protein resides in the cell projection. It localises to the lamellipodium. The protein localises to the stereocilium. In terms of biological role, as part of the KICSTOR complex functions in the amino acid-sensing branch of the TORC1 signaling pathway. Recruits, in an amino acid-independent manner, the GATOR1 complex to the lysosomal membranes and allows its interaction with GATOR2 and the RAG GTPases. Functions upstream of the RAG GTPases and is required to negatively regulate mTORC1 signaling in absence of amino acids. In absence of the KICSTOR complex mTORC1 is constitutively localized to the lysosome and activated. The KICSTOR complex is also probably involved in the regulation of mTORC1 by glucose. In Mus musculus (Mouse), this protein is KICSTOR complex protein kaptin.